The sequence spans 1198 residues: MPVIPALWEVEMGRSQGQEIETILANRSHSDSTPLPNFLSGSHRPECCTCRLLTASGAQDSLPFGRRLYSGPWRSCEEVCHVSVLSVLSTSCGLSLSLPIFPGWMEWLSPDIALPRRDEWTQTSPARKRITHAKVQGAGQLRLSIDAQDRVLLLHIIEGKGLISKQPGTCDPYVKISLIPEDSRLRHQKTQTVPDCRDPAFHEHFFFPVQEEDDQKRLLVTVWNRASQSRQSGLIGCMSFGVKSLLTPDKEISGWYYLLGEHLGRTKHLKVARRRLRPLRDPLLRMPGGGDTENGKKLKITIPRGKDGFGFTICCDSPVRVQAVDSGGPAERAGLQQLDTVLQLNERPVEHWKCVELAHEIRSCPSEIILLVWRMVPQVKPGPDGGVLRRASCKSTHDLQSPPNKREKNCTHGVQARPEQRHSCHLVCDSSDGLLLGGWERYTEVAKRGGQHTLPALSRATAPTDPNYIILAPLNPGSQLLRPVYQEDTIPEESGSPSKGKSYTGLGKKSRLMKTVQTMKGHGNYQNCPVVRPHATHSSYGTYVTLAPKVLVFPVFVQPLDLCNPARTLLLSEELLLYEGRNKAAEVTLFAYSDLLLFTKEDEPGRCDVLRNPLYLQSVKLQEGSSEDLKFCVLYLAEKAECLFTLEAHSQEQKKRVCWCLSENIAKQQQLAASPPDSKMFETEADEKREMALEEGKGPGAEDSPPSKEPSPGQELPPGQDLPPNKDSPSGQEPAPSQEPLSSKDSATSEGSPPGPDAPPSKDVPPCQEPPPAQDLSPCQDLPAGQEPLPHQDPLLTKDLPAIQESPTRDLPPCQDLPPSQVSLPAKALTEDTMSSGDLLAATGDPPAAPRPAFVIPEVRLDSTYSQKAGAEQGCSGDEEDAEEAEEVEEGEEGEEDEDEDTSDDNYGERSEAKRSSMIETGQGAEGGLSLRVQNSLRRRTHSEGSLLQEPRGPCFASDTTLHCSDGEGAASTWGMPSPSTLKKELGRNGGSMHHLSLFFTGHRKMSGADTVGDDDEASRKRKSKNLAKDMKNKLGIFRRRNESPGAPPAGKADKMMKSFKPTSEEALKWGESLEKLLVHKYGLAVFQAFLRTEFSEENLEFWLACEDFKKVKSQSKMASKAKKIFAEYIAIQACKEVNLDSYTREHTKDNLQSVTRGCFDLAQKRIFGLMEKDSYPRFLRSDLYLDLINQKKMSPPL.

The C2 domain occupies 137 to 256; that stretch reads GAGQLRLSID…TPDKEISGWY (120 aa). Residues 299 to 376 enclose the PDZ domain; sequence KITIPRGKDG…EIILLVWRMV (78 aa). Arg448 is modified (omega-N-methylarginine). Residues 669–933 are disordered; that stretch reads QQLAASPPDS…GAEGGLSLRV (265 aa). Ser674 carries the phosphoserine modification. Residues 679 to 697 are compositionally biased toward basic and acidic residues; that stretch reads KMFETEADEKREMALEEGK. A compositionally biased stretch (polar residues) spans 739 to 751; that stretch reads EPLSSKDSATSEG. A compositionally biased stretch (pro residues) spans 753–773; it reads PPGPDAPPSKDVPPCQEPPPA. The span at 877–906 shows a compositional bias: acidic residues; it reads GDEEDAEEAEEVEEGEEGEEDEDEDTSDDN. Residues 907–917 are compositionally biased toward basic and acidic residues; that stretch reads YGERSEAKRSS. Ser943, Ser946, Ser978, and Ser1007 each carry phosphoserine. 2 disordered regions span residues 1007 to 1026 and 1032 to 1056; these read SGAD…KSKN and KNKL…ADKM. The 126-residue stretch at 1073 to 1198 folds into the RGS domain; the sequence is SLEKLLVHKY…INQKKMSPPL (126 aa).

In terms of assembly, binds EFNB1 and EFNB2. Binds the GNB1-GNG2 heterodimer. Post-translationally, phosphorylated by cyclic GMP-dependent protein kinase. ISGylated.

It is found in the cytoplasm. Its subcellular location is the nucleus. It localises to the cell membrane. Down-regulates signaling from heterotrimeric G-proteins by increasing the GTPase activity of the alpha subunits, thereby driving them into their inactive GDP-bound form. Down-regulates G-protein-mediated release of inositol phosphates and activation of MAP kinases. This Homo sapiens (Human) protein is Regulator of G-protein signaling 3 (RGS3).